Consider the following 636-residue polypeptide: DNA-dependent metalloprotease SPRTN (636 aa).

The tract at residues glutamine 19 to serine 42 is disordered. Positions arginine 76–histidine 183 constitute a SprT-like domain. Residue histidine 141 participates in Zn(2+) binding. Glutamate 142 is an active-site residue. Histidine 145 and histidine 160 together coordinate Zn(2+). Disordered regions lie at residues threonine 238–arginine 382 and arginine 398–lysine 430. Positions lysine 241–lysine 268 are enriched in basic and acidic residues. The segment covering proline 272–serine 281 has biased composition (low complexity). The short motif at phenylalanine 290–glycine 298 is the SHP-box element. The segment covering glutamine 302–serine 311 has biased composition (polar residues). Residues proline 313–proline 327 are compositionally biased toward pro residues. Residues arginine 341–glycine 374 show a composition bias toward polar residues. Positions glycine 399–aspartate 416 are enriched in low complexity. Residues glutamate 451 to phenylalanine 458 carry the PIP-box motif. The disordered stretch occupies residues threonine 473–proline 608. Composition is skewed to polar residues over residues phenylalanine 492–serine 523 and serine 545–serine 554. A Nuclear localization signal motif is present at residues serine 535–serine 566. Basic and acidic residues-rich tracts occupy residues arginine 559–phenylalanine 570 and threonine 584–serine 593. The UBZ4-type zinc-finger motif lies at threonine 612 to leucine 636. Residues cysteine 615, cysteine 618, histidine 630, and cysteine 634 each contribute to the Zn(2+) site.

The protein belongs to the Spartan family. As to quaternary structure, homodimer. Requires Zn(2+) as cofactor. In terms of processing, autocatalytically cleaved in response to double-stranded DNA-binding: autocatalytic cleavage takes place in trans and leads to inactivation.

The protein localises to the nucleus. It is found in the chromosome. With respect to regulation, DNA-binding activates the protease activity: single-stranded DNA-binding specifically activates ability to cleave covalent DNA-protein cross-links (DPCs). In contrast, double-stranded DNA-binding specifically activates autocatalytic cleavage, and subsequent inactivation. Its function is as follows. DNA-dependent metalloendopeptidase that mediates the proteolytic cleavage of covalent DNA-protein cross-links (DPCs) during DNA synthesis, thereby playing a key role in maintaining genomic integrity. DPCs are highly toxic DNA lesions that interfere with essential chromatin transactions, such as replication and transcription, and which are induced by reactive agents, such as UV light or formaldehyde. Associates with the DNA replication machinery and specifically removes DPCs during DNA synthesis. Catalyzes proteolytic cleavage of the hmces DNA-protein cross-link following unfolding by the brip1/fancj helicase. Acts as a pleiotropic protease for DNA-binding proteins cross-linked with DNA, such as top1, top2a, histones H3 and H4. Mediates degradation of DPCs that are not ubiquitinated, while it is not able to degrade ubiquitinated DPCs. SPRTN activation requires polymerase collision with DPCs followed by helicase bypass of DPCs. May also act as a 'reader' of ubiquitinated pcna: facilitates chromatin association of rad18 and is required for efficient pcna monoubiquitination, promoting a feed-forward loop to enhance pcna ubiquitination and translesion DNA synthesis. Acts as a regulator of translesion DNA synthesis by recruiting vcp/p97 to sites of DNA damage. The polypeptide is DNA-dependent metalloprotease SPRTN (Danio rerio (Zebrafish)).